Here is a 248-residue protein sequence, read N- to C-terminus: Segregation and condensation protein A (248 aa).

The protein belongs to the ScpA family. In terms of assembly, component of a cohesin-like complex composed of ScpA, ScpB and the Smc homodimer, in which ScpA and ScpB bind to the head domain of Smc. The presence of the three proteins is required for the association of the complex with DNA.

Its subcellular location is the cytoplasm. Participates in chromosomal partition during cell division. May act via the formation of a condensin-like complex containing Smc and ScpB that pull DNA away from mid-cell into both cell halves. This Clostridium perfringens (strain ATCC 13124 / DSM 756 / JCM 1290 / NCIMB 6125 / NCTC 8237 / Type A) protein is Segregation and condensation protein A.